We begin with the raw amino-acid sequence, 97 residues long: MIDLEQVRKVAHLARLELTPEEEQRLPSQLSAILDYVEQLSELDTDNVEPTTRAIDVSNITRTDEQKTFGDCQLLLDNAPDREDDYFRVPKILGESE.

It belongs to the GatC family. Heterotrimer of A, B and C subunits.

The enzyme catalyses L-glutamyl-tRNA(Gln) + L-glutamine + ATP + H2O = L-glutaminyl-tRNA(Gln) + L-glutamate + ADP + phosphate + H(+). It catalyses the reaction L-aspartyl-tRNA(Asn) + L-glutamine + ATP + H2O = L-asparaginyl-tRNA(Asn) + L-glutamate + ADP + phosphate + 2 H(+). Its function is as follows. Allows the formation of correctly charged Asn-tRNA(Asn) or Gln-tRNA(Gln) through the transamidation of misacylated Asp-tRNA(Asn) or Glu-tRNA(Gln) in organisms which lack either or both of asparaginyl-tRNA or glutaminyl-tRNA synthetases. The reaction takes place in the presence of glutamine and ATP through an activated phospho-Asp-tRNA(Asn) or phospho-Glu-tRNA(Gln). The chain is Aspartyl/glutamyl-tRNA(Asn/Gln) amidotransferase subunit C from Picosynechococcus sp. (strain ATCC 27264 / PCC 7002 / PR-6) (Agmenellum quadruplicatum).